A 99-amino-acid chain; its full sequence is Large ribosomal subunit protein uL23 (99 aa).

Belongs to the universal ribosomal protein uL23 family. As to quaternary structure, part of the 50S ribosomal subunit. Contacts protein L29, and trigger factor when it is bound to the ribosome.

Functionally, one of the early assembly proteins it binds 23S rRNA. One of the proteins that surrounds the polypeptide exit tunnel on the outside of the ribosome. Forms the main docking site for trigger factor binding to the ribosome. The chain is Large ribosomal subunit protein uL23 from Synechococcus sp. (strain JA-2-3B'a(2-13)) (Cyanobacteria bacterium Yellowstone B-Prime).